Consider the following 833-residue polypeptide: Leucine--tRNA ligase (833 aa).

Residues 41-52 carry the 'HIGH' region motif; the sequence is PYPSGAGLHVGH. The 'KMSKS' region motif lies at 610-614; it reads KMSKS. Lysine 613 serves as a coordination point for ATP.

Belongs to the class-I aminoacyl-tRNA synthetase family.

It is found in the cytoplasm. It catalyses the reaction tRNA(Leu) + L-leucine + ATP = L-leucyl-tRNA(Leu) + AMP + diphosphate. This chain is Leucine--tRNA ligase, found in Streptococcus pneumoniae (strain 70585).